The primary structure comprises 790 residues: Cadherin-6 (790 aa).

An N-terminal signal peptide occupies residues 1 to 18 (MRTYRYFLLLFWVGQPYP). Positions 19–53 (TFSNPLSKRTSGFPAKRKALELSANSRNELSRSKR) are excised as a propeptide. Cadherin domains are found at residues 54–159 (SWMW…EPIF), 160–268 (TKDV…PPRF), 269–383 (PQST…PPVF), 384–486 (SKLA…DNAP), and 487–608 (EFAE…LIHP). The Extracellular segment spans residues 54 to 615 (SWMWNQFFLL…IHPTGLSTGA (562 aa)). N-linked (GlcNAc...) asparagine glycosylation occurs at Asn-255. The segment at 260 to 291 (DVNDNPPRFPQSTYQFKTPESSPPGTPIGRIK) is disordered. Residues 269 to 279 (PQSTYQFKTPE) show a composition bias toward polar residues. N-linked (GlcNAc...) asparagine glycans are attached at residues Asn-399, Asn-437, Asn-455, and Asn-536. A helical membrane pass occupies residues 616-636 (LVAILLCIVILLVTVVLFAAL). Over 637–790 (RRQRKKEPLI…YGGMDSDKDS (154 aa)) the chain is Cytoplasmic. 2 positions are modified to phosphoserine: Ser-786 and Ser-790.

Its subcellular location is the cell membrane. Its function is as follows. Cadherins are calcium-dependent cell adhesion proteins. They preferentially interact with themselves in a homophilic manner in connecting cells; cadherins may thus contribute to the sorting of heterogeneous cell types. The protein is Cadherin-6 (Cdh6) of Mus musculus (Mouse).